Here is a 60-residue protein sequence, read N- to C-terminus: Sec-independent protein translocase protein TatA (60 aa).

The chain crosses the membrane as a helical span at residues 1–21; the sequence is MTPAGPAQLLIVALVVIVLFG.

This sequence belongs to the TatA/E family. In terms of assembly, the Tat system comprises two distinct complexes: a TatABC complex, containing multiple copies of TatA, TatB and TatC subunits, and a separate TatA complex, containing only TatA subunits. Substrates initially bind to the TatABC complex, which probably triggers association of the separate TatA complex to form the active translocon.

It localises to the cell membrane. In terms of biological role, part of the twin-arginine translocation (Tat) system that transports large folded proteins containing a characteristic twin-arginine motif in their signal peptide across membranes. TatA could form the protein-conducting channel of the Tat system. The protein is Sec-independent protein translocase protein TatA of Corynebacterium glutamicum (strain R).